The sequence spans 203 residues: Endo-type membrane-bound lytic murein transglycosylase A (203 aa).

The N-terminal stretch at 1-15 (MKLRWFAFLVVLLAG) is a signal peptide. A lipid anchor (N-palmitoyl cysteine) is attached at C16. C16 carries S-diacylglycerol cysteine lipidation.

The protein belongs to the transglycosylase Slt family.

It is found in the cell outer membrane. The enzyme catalyses Endolytic cleavage of the (1-&gt;4)-beta-glycosidic linkage between N-acetylmuramic acid (MurNAc) and N-acetylglucosamine (GlcNAc) residues in peptidoglycan with concomitant formation of a 1,6-anhydrobond in the MurNAc residue.. Murein-degrading enzyme. May play a role in recycling of muropeptides during cell elongation and/or cell division. Preferentially cleaves at a distance of more than two disaccharide units from the ends of the glycan chain. This Citrobacter koseri (strain ATCC BAA-895 / CDC 4225-83 / SGSC4696) protein is Endo-type membrane-bound lytic murein transglycosylase A.